We begin with the raw amino-acid sequence, 123 residues long: Protein Wnt-3a (123 aa).

The O-palmitoleoyl serine moiety is linked to residue S1. C89 and C104 are disulfide-bonded. N-linked (GlcNAc...) asparagine glycosylation is present at N90.

This sequence belongs to the Wnt family. Post-translationally, disulfide bonds have critical and distinct roles in secretion and activity. Loss of each conserved cysteine results in high molecular weight oxidized Wnt oligomers, which are formed through inter-Wnt disulfide bonding. Palmitoleoylation is required for efficient binding to frizzled receptors. Depalmitoleoylation leads to Wnt signaling pathway inhibition.

It is found in the secreted. The protein localises to the extracellular space. The protein resides in the extracellular matrix. Ligand for members of the frizzled family of seven transmembrane receptors. Functions in the canonical Wnt signaling pathway that results in activation of transcription factors of the TCF/LEF family. Required for normal embryonic mesoderm development and formation of caudal somites. Required for normal morphogenesis of the developing neural tube. This Pituophis melanoleucus (Pine snake) protein is Protein Wnt-3a (WNT-3A).